Consider the following 251-residue polypeptide: 5'-nucleotidase SurE (251 aa).

D8, D9, S39, and N95 together coordinate a divalent metal cation.

This sequence belongs to the SurE nucleotidase family. Requires a divalent metal cation as cofactor.

Its subcellular location is the cytoplasm. The enzyme catalyses a ribonucleoside 5'-phosphate + H2O = a ribonucleoside + phosphate. Nucleotidase that shows phosphatase activity on nucleoside 5'-monophosphates. The sequence is that of 5'-nucleotidase SurE from Ralstonia pickettii (strain 12J).